Here is a 393-residue protein sequence, read N- to C-terminus: Rhizopuspepsin (393 aa).

A signal peptide spans 1-21 (MKFTLISSCIAIAALAVAVDA). The propeptide at 22-68 (APGEKKISIPLAKNPNYKPSAKNAIQKAIAKYNKHKINTSTGGIVPD) is activation peptide. The Peptidase A1 domain occupies 85–389 (YYGQVTIGTP…NQGVPEVQIA (305 aa)). The active site involves Asp103. A disulfide bond links Cys116 and Cys119. The active site involves Asp286. The cysteines at positions 320 and 353 are disulfide-linked.

The protein belongs to the peptidase A1 family.

It carries out the reaction Hydrolysis of proteins with broad specificity similar to that of pepsin A, preferring hydrophobic residues at P1 and P1'. Clots milk and activates trypsinogen. Does not cleave 4-Gln-|-His-5, but does cleave 10-His-|-Leu-11 and 12-Val-|-Glu-13 in B chain of insulin.. The sequence is that of Rhizopuspepsin from Rhizopus chinensis (Bread mold).